A 235-amino-acid polypeptide reads, in one-letter code: Ribosomal RNA large subunit methyltransferase E (235 aa).

S-adenosyl-L-methionine contacts are provided by Gly76, Trp78, Asp99, Asp115, and Asp139. Lys179 functions as the Proton acceptor in the catalytic mechanism.

It belongs to the class I-like SAM-binding methyltransferase superfamily. RNA methyltransferase RlmE family.

The protein localises to the cytoplasm. It catalyses the reaction uridine(2552) in 23S rRNA + S-adenosyl-L-methionine = 2'-O-methyluridine(2552) in 23S rRNA + S-adenosyl-L-homocysteine + H(+). In terms of biological role, specifically methylates the uridine in position 2552 of 23S rRNA at the 2'-O position of the ribose in the fully assembled 50S ribosomal subunit. The polypeptide is Ribosomal RNA large subunit methyltransferase E (Rhodopseudomonas palustris (strain BisB5)).